Here is a 1694-residue protein sequence, read N- to C-terminus: Homeobox-DDT domain protein RLT2 (1694 aa).

The disordered stretch occupies residues 1-24; the sequence is MEGGSEKTTPEGCGGESKSKRKMK. Residues 17–76 constitute a DNA-binding region (homeobox); sequence SKSKRKMKTAAQLEVLENTYSAEPYPSEAIRADLSVKLNLSDRQLQMWFCHRRLKERKST. Residues 514–573 form the DDT domain; the sequence is DENVANLLMVWRFLITFADVLGLWPFTLDEFAQAFHDYDPRLMGEIHIVLLKTIIKDIEG. An HTH HARE-type domain is found at 696–765; the sequence is GTVKFAAFHV…APSTYCVRAS (70 aa). Residues 795 to 816 show a composition bias toward acidic residues; the sequence is EDVDDAERDEDSESDVGEDPEV. 4 disordered regions span residues 795 to 822, 1450 to 1541, 1555 to 1639, and 1655 to 1674; these read EDVDDAERDEDSESDVGEDPEVDVNLKK, KQEE…ICNE, AKTS…MNMK, and EDSYGRKQHGISISNDAATR. 2 positions are modified to phosphoserine: serine 806 and serine 808. Gly residues predominate over residues 1459 to 1470; sequence GLGGVSSSGRGG. 2 stretches are compositionally biased toward basic residues: residues 1471–1485 and 1515–1531; these read RPPRGRGRPRARGNG and GGRKNGRRSGTKGRKRP. 3 stretches are compositionally biased toward acidic residues: residues 1561–1578, 1589–1605, and 1624–1635; these read DNDDDWIETPELQDDDGE, EDYDDDDVMAPIDDFDG, and DEYEEEEEEEED.

As to quaternary structure, interacts with CHR11. Interacts (via the DDT domain) with CHR11 (via C-terminus). Highly expressed in growing tissues such as inflorescence and flower meristems, young leaves and floral organs. Expressed in roots, rosette and cauline leaves, stems, flowers, inflorescences and siliques.

It is found in the nucleus. Functionally, transcriptional regulator required for the maintenance of the plant vegetative phase. In association with CHR11 or CHR17 may prevent the early activation of the vegetative-to-reproductive transition by regulating key genes that contribute to flower timing, such as FT, SEP1, SEP3, AGL8/FUL, SOC1 and FLC. Involved in the transcriptional regulation of seed-specific gene expression. This Arabidopsis thaliana (Mouse-ear cress) protein is Homeobox-DDT domain protein RLT2.